The sequence spans 281 residues: Pantothenate synthetase (281 aa).

30-37 contacts ATP; the sequence is MGNLHQGH. Catalysis depends on H37, which acts as the Proton donor. Q61 serves as a coordination point for (R)-pantoate. Residue Q61 coordinates beta-alanine. 148-151 provides a ligand contact to ATP; sequence GQKD. A (R)-pantoate-binding site is contributed by Q154. Residues A177 and 185-188 contribute to the ATP site; that span reads LSSR.

It belongs to the pantothenate synthetase family. Homodimer.

The protein resides in the cytoplasm. It catalyses the reaction (R)-pantoate + beta-alanine + ATP = (R)-pantothenate + AMP + diphosphate + H(+). The protein operates within cofactor biosynthesis; (R)-pantothenate biosynthesis; (R)-pantothenate from (R)-pantoate and beta-alanine: step 1/1. Functionally, catalyzes the condensation of pantoate with beta-alanine in an ATP-dependent reaction via a pantoyl-adenylate intermediate. The chain is Pantothenate synthetase from Acinetobacter baylyi (strain ATCC 33305 / BD413 / ADP1).